The chain runs to 298 residues: Tyrosine recombinase XerD (298 aa).

The Core-binding (CB) domain occupies 3–88 (TLEHPLIDRF…GLRGFYRYCL (86 aa)). Positions 109–292 (PLPKSLSEAD…ARARLQDLHA (184 aa)) constitute a Tyr recombinase domain. Catalysis depends on residues R149, K173, H244, R247, and H270. Catalysis depends on Y279, which acts as the O-(3'-phospho-DNA)-tyrosine intermediate.

This sequence belongs to the 'phage' integrase family. XerD subfamily. Forms a cyclic heterotetrameric complex composed of two molecules of XerC and two molecules of XerD.

It localises to the cytoplasm. In terms of biological role, site-specific tyrosine recombinase, which acts by catalyzing the cutting and rejoining of the recombining DNA molecules. The XerC-XerD complex is essential to convert dimers of the bacterial chromosome into monomers to permit their segregation at cell division. It also contributes to the segregational stability of plasmids. The chain is Tyrosine recombinase XerD from Pseudomonas aeruginosa (strain ATCC 15692 / DSM 22644 / CIP 104116 / JCM 14847 / LMG 12228 / 1C / PRS 101 / PAO1).